The following is an 856-amino-acid chain: Putative zinc protease C28F5.4 (856 aa).

Residue His-71 coordinates Zn(2+). Glu-74 acts as the Proton acceptor in catalysis. His-75 and Glu-152 together coordinate Zn(2+).

The protein belongs to the peptidase M16 family.

The chain is Putative zinc protease C28F5.4 from Caenorhabditis elegans.